Consider the following 639-residue polypeptide: Elongation factor 4 (639 aa).

In terms of domain architecture, tr-type G spans 39–220 (AQIRNFCIIA…EVVRLVPPPT (182 aa)). Residues 51-56 (DHGKST) and 167-170 (NKID) contribute to the GTP site.

It belongs to the TRAFAC class translation factor GTPase superfamily. Classic translation factor GTPase family. LepA subfamily.

It is found in the cell membrane. The enzyme catalyses GTP + H2O = GDP + phosphate + H(+). Functionally, required for accurate and efficient protein synthesis under certain stress conditions. May act as a fidelity factor of the translation reaction, by catalyzing a one-codon backward translocation of tRNAs on improperly translocated ribosomes. Back-translocation proceeds from a post-translocation (POST) complex to a pre-translocation (PRE) complex, thus giving elongation factor G a second chance to translocate the tRNAs correctly. Binds to ribosomes in a GTP-dependent manner. This is Elongation factor 4 from Mycobacterium sp. (strain JLS).